The sequence spans 725 residues: Consortin (725 aa).

Disordered stretches follow at residues 1–72, 103–124, 296–353, 375–397, and 485–510; these read MDDS…LNNN, GKDKKIPGKRSPRSKKGTAKKI, LLVS…SLSV, TQSSETAGSPSGPDSSEDACEDD, and QQPDLTDSDGKSPQAQADSDGSENVL. At 1 to 664 the chain is on the cytoplasmic side; sequence MDDSDTPTYY…LDQDEVGGGS (664 aa). Residues 63 to 72 are compositionally biased toward polar residues; that stretch reads VSEQDSLNNN. Positions 109-121 are enriched in basic residues; sequence PGKRSPRSKKGTA. The segment covering 300–314 has biased composition (basic and acidic residues); sequence EDPKEGGATTKESES. 2 stretches are compositionally biased toward polar residues: residues 343–353 and 375–388; these read DVQTDSPSLSV and TQSSETAGSPSGPD. The chain crosses the membrane as a helical span at residues 665–685; sequence CILLVLLCIATVFLSVGGTAL. At 686 to 725 the chain is on the extracellular side; the sequence is YCTFGDMESPVCTDFADNMDFYYTKLLQGVAELKHWIYLS.

The protein belongs to the CNST family. As to quaternary structure, interacts with connexins GJA1/CX43, GJB1/CX32, GJB2/CX26, GJB3/CX31, GJB6/CX30 and GJC1/CX45. Also interacts with GGA1 and GGA2. Does not interact with PANX1.

The protein resides in the cell membrane. It is found in the golgi apparatus. The protein localises to the trans-Golgi network membrane. It localises to the cytoplasmic vesicle. Its subcellular location is the secretory vesicle. Functionally, required for targeting of connexins to the plasma membrane. The chain is Consortin (CNST) from Homo sapiens (Human).